Reading from the N-terminus, the 247-residue chain is ATP synthase subunit a, chloroplastic (247 aa).

5 helical membrane passes run 38-58 (QVLI…TLAV), 95-115 (VPFI…GALL), 134-154 (INTT…AGLT), 199-219 (LVVV…VMFL), and 220-240 (GLFT…AYIG).

Belongs to the ATPase A chain family. In terms of assembly, F-type ATPases have 2 components, CF(1) - the catalytic core - and CF(0) - the membrane proton channel. CF(1) has five subunits: alpha(3), beta(3), gamma(1), delta(1), epsilon(1). CF(0) has four main subunits: a, b, b' and c.

It is found in the plastid. The protein localises to the chloroplast thylakoid membrane. Key component of the proton channel; it plays a direct role in the translocation of protons across the membrane. This is ATP synthase subunit a, chloroplastic from Jasminum nudiflorum (Winter jasmine).